A 453-amino-acid polypeptide reads, in one-letter code: GTPase Der (453 aa).

2 EngA-type G domains span residues 3–167 (FTLA…PAQT) and 187–360 (IKVA…AVWN). Residues 9–16 (GRPNVGKS), 56–60 (DTAGL), 119–122 (NKSE), 193–200 (GRPNAGKS), 240–244 (DTAGL), and 305–308 (NKSD) each bind GTP. Residues 361-445 (TRIPTNPLNR…PIRLTLREKG (85 aa)) enclose the KH-like domain.

It belongs to the TRAFAC class TrmE-Era-EngA-EngB-Septin-like GTPase superfamily. EngA (Der) GTPase family. As to quaternary structure, associates with the 50S ribosomal subunit.

Functionally, GTPase that plays an essential role in the late steps of ribosome biogenesis. In Azorhizobium caulinodans (strain ATCC 43989 / DSM 5975 / JCM 20966 / LMG 6465 / NBRC 14845 / NCIMB 13405 / ORS 571), this protein is GTPase Der.